Consider the following 92-residue polypeptide: NELL2-interacting cell ontogeny regulator 1 (92 aa).

The first 30 residues, 1–30, serve as a signal peptide directing secretion; that stretch reads MALPSAWSVMRVVIPFISVLGLLGVRLVGA.

It belongs to the NICOL family.

Its subcellular location is the secreted. It is found in the cytoplasm. It localises to the perinuclear region. Its function is as follows. mRNA-binding protein which interacts with a range of target mRNAs and may promote extracellular matrix production. May function as a component of lumicrine signaling and may play a crucial role in epididymal-mediated sperm maturation and male fertility. This Gallus gallus (Chicken) protein is NELL2-interacting cell ontogeny regulator 1.